We begin with the raw amino-acid sequence, 75 residues long: Large ribosomal subunit protein bL31 (75 aa).

Belongs to the bacterial ribosomal protein bL31 family. Type A subfamily. As to quaternary structure, part of the 50S ribosomal subunit.

In terms of biological role, binds the 23S rRNA. The protein is Large ribosomal subunit protein bL31 of Nitrobacter winogradskyi (strain ATCC 25391 / DSM 10237 / CIP 104748 / NCIMB 11846 / Nb-255).